A 995-amino-acid chain; its full sequence is Probable copper-transporting ATPase HMA5 (995 aa).

Residues 1-299 lie on the Cytoplasmic side of the membrane; the sequence is MATKLLSLTC…QGEIKQYYKS (299 aa). HMA domains are found at residues 51–117 and 129–195; these read SRAV…FEAS and QVCR…FEAV. Cu(+) is bound by residues C62, C65, C140, and C143. The 67-residue stretch at 204 to 270 folds into the HMA 3; degenerate domain; it reads SKIDLKIDGE…VIESTVFGHS (67 aa). A helical membrane pass occupies residues 300-321; that stretch reads FLWSLVFTVPVFLTAMVFMYIP. Residues 322-340 are Extracellular-facing; sequence GIKDLLMFKVINMLTVGEI. The helical transmembrane segment at 341-360 threads the bilayer; the sequence is IRCVLATPVQFVIGWRFYTG. Over 361–367 the chain is Cytoplasmic; it reads SYKALRR. Residues 368–388 traverse the membrane as a helical segment; sequence GSANMDVLIALGTNAAYFYSL. Over 389–406 the chain is Extracellular; that stretch reads YTVLRAATSPDFKGVDFF. Residues 407-427 traverse the membrane as a helical segment; that stretch reads ETSAMLISFIILGKYLEVMAK. Topologically, residues 428–561 are cytoplasmic; it reads GKTSQAIAKL…KAPVQKLADR (134 aa). A helical transmembrane segment spans residues 562 to 584; it reads ISKFFVPLVIFLSFSTWLAWFLA. Over 585 to 605 the chain is Extracellular; that stretch reads GKLHWYPESWIPSSMDSFELA. The chain crosses the membrane as a helical span at residues 606–623; it reads LQFGISVMVIACPCALGL. At 624 to 920 the chain is on the cytoplasmic side; it reads ATPTAVMVGT…DLSRKTFSRI (297 aa). D661 acts as the 4-aspartylphosphate intermediate in catalysis. Residues D866 and D870 each coordinate Mg(2+). Residues 921 to 940 form a helical membrane-spanning segment; the sequence is RLNYVWALGYNLMGIPIAAG. The Extracellular segment spans residues 941 to 952; the sequence is VLFPGTRFRLPP. The chain crosses the membrane as a helical span at residues 953–971; that stretch reads WIAGAAMAASSVSVVCCSL. The Cytoplasmic portion of the chain corresponds to 972 to 995; the sequence is LLKNYKRPKKLDHLEIREIQVERV.

Belongs to the cation transport ATPase (P-type) (TC 3.A.3) family. Type IB subfamily. Interacts with ATX1. As to expression, expressed in roots and flowers.

It localises to the membrane. The catalysed reaction is Cu(+)(in) + ATP + H2O = Cu(+)(out) + ADP + phosphate + H(+). Functionally, involved in copper import into the cell. May play a role in copper detoxification in roots. The sequence is that of Probable copper-transporting ATPase HMA5 (HMA5) from Arabidopsis thaliana (Mouse-ear cress).